We begin with the raw amino-acid sequence, 122 residues long: Photosystem II extrinsic protein U (122 aa).

A signal peptide spans 1–26 (MKTIVRLFAILMVLISSVGFVGSAVA).

The protein belongs to the PsbU family. PSII is composed of 1 copy each of membrane proteins PsbA, PsbB, PsbC, PsbD, PsbE, PsbF, PsbH, PsbI, PsbJ, PsbK, PsbL, PsbM, PsbT, PsbX, PsbY, PsbZ, Psb30/Ycf12, peripheral proteins PsbO, CyanoQ (PsbQ), PsbU, PsbV and a large number of cofactors. It forms dimeric complexes.

Its subcellular location is the cellular thylakoid membrane. Its function is as follows. One of the extrinsic, lumenal subunits of photosystem II (PSII). PSII is a light-driven water plastoquinone oxidoreductase, using light energy to abstract electrons from H(2)O, generating a proton gradient subsequently used for ATP formation. The extrinsic proteins stabilize the structure of photosystem II oxygen-evolving complex (OEC), the ion environment of oxygen evolution and protect the OEC against heat-induced inactivation. In Crocosphaera subtropica (strain ATCC 51142 / BH68) (Cyanothece sp. (strain ATCC 51142)), this protein is Photosystem II extrinsic protein U.